The sequence spans 93 residues: Small ribosomal subunit protein uS19 (93 aa).

The protein belongs to the universal ribosomal protein uS19 family.

Functionally, protein S19 forms a complex with S13 that binds strongly to the 16S ribosomal RNA. The polypeptide is Small ribosomal subunit protein uS19 (Nocardia farcinica (strain IFM 10152)).